Consider the following 220-residue polypeptide: Late transcription elongation factor OPG087 (220 aa).

This sequence belongs to the orthopoxvirus OPG087 family. Interacts with H5 and A18. Might be part of a transcription complex composed at least of OPG087, OPG145, and OPG110.

In terms of biological role, involved in postreplicative transcription elongation on intermediate and late genes. The sequence is that of Late transcription elongation factor OPG087 (OPG087) from Cynomys gunnisoni (Gunnison's prairie dog).